Here is a 240-residue protein sequence, read N- to C-terminus: Urease accessory protein UreD (240 aa).

This sequence belongs to the UreD family. UreD, UreF and UreG form a complex that acts as a GTP-hydrolysis-dependent molecular chaperone, activating the urease apoprotein by helping to assemble the nickel containing metallocenter of UreC. The UreE protein probably delivers the nickel.

The protein localises to the cytoplasm. Its function is as follows. Required for maturation of urease via the functional incorporation of the urease nickel metallocenter. This Granulibacter bethesdensis (strain ATCC BAA-1260 / CGDNIH1) protein is Urease accessory protein UreD.